The primary structure comprises 623 residues: Kelch repeat and BTB domain-containing protein 2 (623 aa).

One can recognise a BTB domain in the interval 31–98 (TDIVLIVEGT…AYTGNLAMND (68 aa)). Residues 133 to 229 (CVRLLSFADL…IRIDALSEVT (97 aa)) enclose the BACK domain. S300 carries the phosphoserine modification. Kelch repeat units follow at residues 317–380 (DIYI…CCEG), 381–429 (YIYA…VVHD), 431–469 (IYVM…AFGD), 470–529 (KIFY…RAVV), and 535–581 (CVFM…DFRC).

As to quaternary structure, component of the BCR(KBTBD2) E3 ubiquitin ligase complex, at least composed of CUL3, KBTBD2 and RBX1. Interacts (via the BTB domain) with CUL3.

It functions in the pathway protein modification; protein ubiquitination. Functionally, substrate-specific adapter of a BCR (BTB-CUL3-RBX1) E3 ubiquitin ligase complex that acts as a regulator of the insulin signaling pathway, modulating insulin sensitivity by limiting PIK3R1/p85alpha abundance in adipocytes. Targets PIK3R1, the regulatory subunit of phosphatidylinositol 3-kinase (PI3K), for 'Lys-48'-linked polyubiquitination and proteasome-mediated degradation. The sequence is that of Kelch repeat and BTB domain-containing protein 2 from Homo sapiens (Human).